The following is a 529-amino-acid chain: Auxin response factor 13 (529 aa).

A disordered region spans residues 1–22 (MARPPAATAPPPPPPPPPPPPP). Pro residues predominate over residues 7 to 22 (ATAPPPPPPPPPPPPP). A DNA-binding region (TF-B3) is located at residues 128–234 (YAKQLTQSDA…KLLVGVRRAA (107 aa)). 2 disordered regions span residues 443-462 (IVTP…PLSA) and 497-529 (PEGV…GARL). Residues 444–461 (VTPQNGSPPDNPVNTPLS) show a composition bias toward polar residues. Residues 499–510 (GVDDETATEEAS) are compositionally biased toward acidic residues. The span at 511–523 (DTSLPDSLTNGHN) shows a compositional bias: polar residues.

It belongs to the ARF family. As to quaternary structure, homo and heterodimers. Expressed in roots, culms, leaves and young panicles.

Its subcellular location is the nucleus. Functionally, auxin response factors (ARFs) are transcriptional factors that bind specifically to the DNA sequence 5'-TGTCTC-3' found in the auxin-responsive promoter elements (AuxREs). This is Auxin response factor 13 (ARF13) from Oryza sativa subsp. japonica (Rice).